Here is a 333-residue protein sequence, read N- to C-terminus: Protein-methionine-sulfoxide reductase catalytic subunit MsrP (333 aa).

Residues 1-43 (MHKHRKPTEADVTPESLFYQRRRILKALGISAAALSLPFSAQA) constitute a signal peptide (tat-type signal). Mo-molybdopterin contacts are provided by residues asparagine 87, 90-91 (YE), cysteine 145, threonine 180, asparagine 232, arginine 237, and 248-250 (NIK).

The protein belongs to the MsrP family. As to quaternary structure, heterodimer of a catalytic subunit (MsrP) and a heme-binding subunit (MsrQ). Mo-molybdopterin serves as cofactor. Post-translationally, predicted to be exported by the Tat system. The position of the signal peptide cleavage has not been experimentally proven.

It localises to the periplasm. The catalysed reaction is L-methionyl-[protein] + a quinone + H2O = L-methionyl-(S)-S-oxide-[protein] + a quinol. It catalyses the reaction L-methionyl-[protein] + a quinone + H2O = L-methionyl-(R)-S-oxide-[protein] + a quinol. Functionally, part of the MsrPQ system that repairs oxidized periplasmic proteins containing methionine sulfoxide residues (Met-O), using respiratory chain electrons. Thus protects these proteins from oxidative-stress damage caused by reactive species of oxygen and chlorine generated by the host defense mechanisms. MsrPQ is essential for the maintenance of envelope integrity under bleach stress, rescuing a wide series of structurally unrelated periplasmic proteins from methionine oxidation. The catalytic subunit MsrP is non-stereospecific, being able to reduce both (R-) and (S-) diastereoisomers of methionine sulfoxide. The protein is Protein-methionine-sulfoxide reductase catalytic subunit MsrP of Pectobacterium carotovorum subsp. carotovorum (strain PC1).